The chain runs to 109 residues: U3-lycotoxin-Ls1x (109 aa).

Residues 1 to 20 (MKFVLLFGVLLVTLFSYSSA) form the signal peptide. A propeptide spanning residues 21-44 (EMLDDFDQADEDELLSLIEKEEAR) is cleaved from the precursor. Cystine bridges form between Cys48-Cys63, Cys55-Cys72, Cys62-Cys88, and Cys74-Cys86.

This sequence belongs to the neurotoxin 19 (CSTX) family. 01 subfamily. Expressed by the venom gland.

It localises to the secreted. The chain is U3-lycotoxin-Ls1x from Lycosa singoriensis (Wolf spider).